A 130-amino-acid chain; its full sequence is Small ribosomal subunit protein uS9 (130 aa).

It belongs to the universal ribosomal protein uS9 family.

This chain is Small ribosomal subunit protein uS9, found in Streptococcus equi subsp. zooepidemicus (strain H70).